The sequence spans 245 residues: Transmembrane and ubiquitin-like domain-containing protein 1 (245 aa).

Residues 2–30 (ALIEGVGDEVTVLFSVLACLLVLALAWVS) form a required to release iHOPS from membranes region. A helical transmembrane segment spans residues 11 to 31 (VTVLFSVLACLLVLALAWVST). Over residues 34-51 (TESTDPLPQSSGTTTPAQ) the composition is skewed to polar residues. The disordered stretch occupies residues 34 to 100 (TESTDPLPQS…ASTPPDSPQE (67 aa)). A phosphoserine mark is found at Ser-73, Ser-97, and Ser-126. The 74-residue stretch at 102 to 175 (LLLRLKFLND…LHCHVSTRVG (74 aa)) folds into the Ubiquitin-like domain. A run of 2 helical transmembrane segments spans residues 194–214 (IGSL…YCQI) and 219–239 (FFPL…SLLA).

In terms of assembly, interacts with EEF1A1, GRIA2, GRIP1. Interacts with CAMLG, TUBG1. Interacts with NPM1 and CDKN2A; TMUB1 can enhance interaction between NPM1 and CDKN2A and is proposed to bridge the proteins; proposed to be mediated by iHOPS. Interacts with ERLIN2 and AMFR; TMUB1 promotes the interaction of ERLIN2 with AMFR. In terms of processing, processed by regulated intramembrane proteolysis (RIP) in the N-terminus to release iHOPS from membranes.

Its subcellular location is the membrane. The protein localises to the postsynaptic cell membrane. It localises to the recycling endosome. It is found in the cytoplasm. The protein resides in the cytoskeleton. Its subcellular location is the microtubule organizing center. The protein localises to the centrosome. It localises to the nucleus. It is found in the nucleolus. Involved in sterol-regulated ubiquitination and degradation of HMG-CoA reductase HMGCR. Involved in positive regulation of AMPA-selective glutamate receptor GRIA2 recycling to the cell surface. Acts as a negative regulator of hepatocyte growth during regeneration. Its function is as follows. May contribute to the regulation of translation during cell-cycle progression. May contribute to the regulation of cell proliferation. May be involved in centrosome assembly. Modulates stabilization and nucleolar localization of tumor suppressor CDKN2A and enhances association between CDKN2A and NPM1. The sequence is that of Transmembrane and ubiquitin-like domain-containing protein 1 (Tmub1) from Rattus norvegicus (Rat).